The primary structure comprises 482 residues: Serine decarboxylase 1 (482 aa).

The segment at 36 to 55 (EVESPPRPAEEEGEGSPTRR) is disordered. Histidine 200 serves as a coordination point for substrate. The residue at position 312 (lysine 312) is an N6-(pyridoxal phosphate)lysine.

Belongs to the group II decarboxylase family. Requires pyridoxal 5'-phosphate as cofactor.

It carries out the reaction L-serine + H(+) = ethanolamine + CO2. In terms of biological role, catalyzes the biosynthesis of ethanolamine from serine. Decarboxylation of free serine is the major source of ethanolamine production in plants and ethanolamine metabolism is crucial for the synthesis of choline, phosphatidylethanolamine (PE) and phosphatidylcholine (PC), and thus for plant growth. The protein is Serine decarboxylase 1 (SDC1) of Oryza sativa subsp. japonica (Rice).